The chain runs to 211 residues: Xanthine phosphoribosyltransferase (211 aa).

Xanthine contacts are provided by L31 and N38. 138–142 is a 5-phospho-alpha-D-ribose 1-diphosphate binding site; it reads ANGRT. A xanthine-binding site is contributed by K166.

Belongs to the purine/pyrimidine phosphoribosyltransferase family. Xpt subfamily. As to quaternary structure, homodimer.

It localises to the cytoplasm. The catalysed reaction is XMP + diphosphate = xanthine + 5-phospho-alpha-D-ribose 1-diphosphate. The protein operates within purine metabolism; XMP biosynthesis via salvage pathway; XMP from xanthine: step 1/1. Converts the preformed base xanthine, a product of nucleic acid breakdown, to xanthosine 5'-monophosphate (XMP), so it can be reused for RNA or DNA synthesis. The protein is Xanthine phosphoribosyltransferase of Chloroflexus aurantiacus (strain ATCC 29364 / DSM 637 / Y-400-fl).